The chain runs to 100 residues: Putative septation protein SpoVG (100 aa).

Belongs to the SpoVG family.

Could be involved in septation. This Staphylococcus haemolyticus (strain JCSC1435) protein is Putative septation protein SpoVG.